We begin with the raw amino-acid sequence, 475 residues long: Tetratricopeptide repeat protein 29 (475 aa).

7 TPR repeats span residues 92–131, 136–173, 182–215, 234–267, 274–307, 314–347, and 354–387; these read DALR…EDAE, FEDV…AQLI, AEAH…TQGR, LRTY…AKEG, GEAS…STEL, GRAY…ARNN, and VRAS…TVEL. Residues 436–475 are disordered; it reads DIEPDPVTEEFRGSTVETVSQNSEHLEELSRFPGDQKNET. Residues 459-475 show a composition bias toward basic and acidic residues; sequence EHLEELSRFPGDQKNET.

Its subcellular location is the cytoplasm. The protein localises to the cytoskeleton. It localises to the flagellum axoneme. Axonemal protein which is implicated in axonemal and/or peri-axonemal structure assembly and regulates flagellum assembly and beating and therefore sperm motility. This Macaca fascicularis (Crab-eating macaque) protein is Tetratricopeptide repeat protein 29 (TTC29).